The sequence spans 914 residues: Exoglucanase-2 (914 aa).

Residues 1–33 form the signal peptide; the sequence is MKRRLMKGISLLTLVFLIGIMLQLSLKSELTAY. Residues 763–914 enclose the CBM3 domain; the sequence is VEGVLIIQSF…SGNLVYGIEP (152 aa).

The protein belongs to the glycosyl hydrolase 48 (cellulase L) family.

The catalysed reaction is Hydrolysis of (1-&gt;4)-beta-D-glucosidic linkages in cellulose and cellotetraose, releasing cellobiose from the non-reducing ends of the chains.. This is Exoglucanase-2 (celY) from Thermoclostridium stercorarium (strain ATCC 35414 / DSM 8532 / NCIMB 11754) (Clostridium stercorarium).